Here is a 206-residue protein sequence, read N- to C-terminus: Large ribosomal subunit protein uL4 (206 aa).

Residues 42–54 (RRQQGTHQSQGRS) show a composition bias toward polar residues. The segment at 42–94 (RRQQGTHQSQGRSDVSRTGAKMFKQKGTGRARHSSARAPQFRGGGKAHGPVFR) is disordered. A compositionally biased stretch (basic residues) spans 64-76 (FKQKGTGRARHSS).

Belongs to the universal ribosomal protein uL4 family. In terms of assembly, part of the 50S ribosomal subunit.

Functionally, one of the primary rRNA binding proteins, this protein initially binds near the 5'-end of the 23S rRNA. It is important during the early stages of 50S assembly. It makes multiple contacts with different domains of the 23S rRNA in the assembled 50S subunit and ribosome. In terms of biological role, forms part of the polypeptide exit tunnel. The protein is Large ribosomal subunit protein uL4 of Bartonella tribocorum (strain CIP 105476 / IBS 506).